Here is a 321-residue protein sequence, read N- to C-terminus: Cytochrome c biogenesis protein CcsA (321 aa).

The next 7 membrane-spanning stretches (helical) occupy residues 9–29 (ILTHISFSTISIVITIHLITL), 44–64 (GMIATFFCITGFLVSRWASSG), 68–88 (LSNLYESLIFLSWALYILHMI), 143–163 (MLLSYATLLCGSLLSAALLMI), 226–246 (VISLGFTLLTIGILCGAVWAN), 260–274 (TWAFITWTIFAIYLH), and 289–309 (VASIGFLIIWICYFGINLLGI).

Belongs to the CcmF/CycK/Ccl1/NrfE/CcsA family. May interact with Ccs1.

It is found in the plastid. It localises to the chloroplast thylakoid membrane. Required during biogenesis of c-type cytochromes (cytochrome c6 and cytochrome f) at the step of heme attachment. This is Cytochrome c biogenesis protein CcsA from Oryza sativa subsp. indica (Rice).